Consider the following 255-residue polypeptide: tRNA (guanine-N(1)-)-methyltransferase (255 aa).

Residues glycine 113 and 133 to 138 (IGDYVL) each bind S-adenosyl-L-methionine.

This sequence belongs to the RNA methyltransferase TrmD family. As to quaternary structure, homodimer.

It localises to the cytoplasm. It carries out the reaction guanosine(37) in tRNA + S-adenosyl-L-methionine = N(1)-methylguanosine(37) in tRNA + S-adenosyl-L-homocysteine + H(+). In terms of biological role, specifically methylates guanosine-37 in various tRNAs. This is tRNA (guanine-N(1)-)-methyltransferase from Chloroflexus aggregans (strain MD-66 / DSM 9485).